We begin with the raw amino-acid sequence, 64 residues long: Large ribosomal subunit protein bL35 (64 aa).

The protein belongs to the bacterial ribosomal protein bL35 family.

The protein is Large ribosomal subunit protein bL35 of Helicobacter hepaticus (strain ATCC 51449 / 3B1).